The following is an 823-amino-acid chain: Nuclear pore complex protein Nup93-1 (823 aa).

It belongs to the nucleoporin interacting component (NIC) family. In terms of assembly, part of the nuclear pore complex (NPC). Interacts with msk (via C-terminus); this association might be facilitated by Nup75. Interacts with Mad (preferentially when phosphorylated). Interacts with Nup154 (via N-terminus). Interacts with the Polycomb group (PcG) proteins Pc and E(z).

It localises to the nucleus membrane. The protein localises to the nucleus. It is found in the nuclear pore complex. The protein resides in the nucleoplasm. Functionally, required for nuclear pore complex assembly, maintenance and function. Required for nuclear import of phosphorylated Mad via importin msk. Has no role in classical nuclear localization signal (cNLS)-dependent nuclear import via importin-beta. Mediates the association between the nuclear pore complex and a subclass of silenced regions bound by Polycomb group (PcG) proteins, enables long-range interactions between Polycomb loci and contributes to repression of polycomb targets. Together with Nup62 and Nup154, contributes to karyosome morphology and chromatin organization including attachment to the nuclear envelope in oocytes and nurse cells. The chain is Nuclear pore complex protein Nup93-1 from Drosophila melanogaster (Fruit fly).